Reading from the N-terminus, the 464-residue chain is Methionine aminopeptidase 2 (464 aa).

Residues 1 to 86 (MGSKTPGNHR…RKKKKKNTKE (86 aa)) are disordered. Acidic residues predominate over residues 43 to 54 (GESEGGEDEDDD). Residues 72–83 (KRNKRRKKKKKN) are compositionally biased toward basic residues. A substrate-binding site is contributed by histidine 216. A divalent metal cation contacts are provided by aspartate 237, aspartate 248, and histidine 317. Residue histidine 325 participates in substrate binding. A divalent metal cation is bound by residues glutamate 350 and glutamate 445.

It belongs to the peptidase M24A family. Methionine aminopeptidase eukaryotic type 2 subfamily. It depends on Co(2+) as a cofactor. The cofactor is Zn(2+). Mn(2+) serves as cofactor. Requires Fe(2+) as cofactor.

Its subcellular location is the cytoplasm. It catalyses the reaction Release of N-terminal amino acids, preferentially methionine, from peptides and arylamides.. Functionally, cotranslationally removes the N-terminal methionine from nascent proteins. The N-terminal methionine is often cleaved when the second residue in the primary sequence is small and uncharged (Met-Ala-, Cys, Gly, Pro, Ser, Thr, or Val). This Ajellomyces capsulatus (strain NAm1 / WU24) (Darling's disease fungus) protein is Methionine aminopeptidase 2.